Reading from the N-terminus, the 448-residue chain is Homogentisate 1,2-dioxygenase (448 aa).

His303 serves as the catalytic Proton acceptor. His346 and Glu352 together coordinate Fe cation. Homogentisate-binding residues include Tyr361 and His382. His382 lines the Fe cation pocket.

It belongs to the homogentisate dioxygenase family. Hexamer; dimer of trimers. Requires Fe cation as cofactor.

The catalysed reaction is homogentisate + O2 = 4-maleylacetoacetate + H(+). It participates in amino-acid degradation; L-phenylalanine degradation; acetoacetate and fumarate from L-phenylalanine: step 4/6. Involved in the catabolism of homogentisate (2,5-dihydroxyphenylacetate or 2,5-OH-PhAc), a central intermediate in the degradation of phenylalanine and tyrosine. Catalyzes the oxidative ring cleavage of the aromatic ring of homogentisate to yield maleylacetoacetate. The protein is Homogentisate 1,2-dioxygenase of Rhodopseudomonas palustris (strain ATCC BAA-98 / CGA009).